A 474-amino-acid polypeptide reads, in one-letter code: Methylenetetrahydrofolate--tRNA-(uracil-5-)-methyltransferase TrmFO (474 aa).

9–14 contributes to the FAD binding site; it reads GGGLAG.

It belongs to the MnmG family. TrmFO subfamily. FAD is required as a cofactor.

Its subcellular location is the cytoplasm. It catalyses the reaction uridine(54) in tRNA + (6R)-5,10-methylene-5,6,7,8-tetrahydrofolate + NADH + H(+) = 5-methyluridine(54) in tRNA + (6S)-5,6,7,8-tetrahydrofolate + NAD(+). The enzyme catalyses uridine(54) in tRNA + (6R)-5,10-methylene-5,6,7,8-tetrahydrofolate + NADPH + H(+) = 5-methyluridine(54) in tRNA + (6S)-5,6,7,8-tetrahydrofolate + NADP(+). Catalyzes the folate-dependent formation of 5-methyl-uridine at position 54 (M-5-U54) in all tRNAs. This chain is Methylenetetrahydrofolate--tRNA-(uracil-5-)-methyltransferase TrmFO, found in Methylorubrum extorquens (strain PA1) (Methylobacterium extorquens).